The following is a 394-amino-acid chain: NAD(P)H-quinone oxidoreductase subunit H (394 aa).

Belongs to the complex I 49 kDa subunit family. NDH-1 can be composed of about 15 different subunits; different subcomplexes with different compositions have been identified which probably have different functions.

It is found in the cellular thylakoid membrane. The catalysed reaction is a plastoquinone + NADH + (n+1) H(+)(in) = a plastoquinol + NAD(+) + n H(+)(out). It carries out the reaction a plastoquinone + NADPH + (n+1) H(+)(in) = a plastoquinol + NADP(+) + n H(+)(out). In terms of biological role, NDH-1 shuttles electrons from an unknown electron donor, via FMN and iron-sulfur (Fe-S) centers, to quinones in the respiratory and/or the photosynthetic chain. The immediate electron acceptor for the enzyme in this species is believed to be plastoquinone. Couples the redox reaction to proton translocation, and thus conserves the redox energy in a proton gradient. Cyanobacterial NDH-1 also plays a role in inorganic carbon-concentration. The polypeptide is NAD(P)H-quinone oxidoreductase subunit H (Synechococcus sp. (strain JA-3-3Ab) (Cyanobacteria bacterium Yellowstone A-Prime)).